The chain runs to 317 residues: UV DNA damage endonuclease (317 aa).

It belongs to the uve1/UvsE family.

Functionally, component in a DNA repair pathway. Removal of UV LIGHT damaged nucleotides. Recognizes pyrimidine dimers and cleave a phosphodiester bond immediately 5' to the lesion. The sequence is that of UV DNA damage endonuclease from Bacillus mycoides (strain KBAB4) (Bacillus weihenstephanensis).